Reading from the N-terminus, the 428-residue chain is Chaperone SurA (428 aa).

The first 20 residues, 1 to 20 (MKNWKTLLLGIAMIANTSFA), serve as a signal peptide directing secretion. PpiC domains are found at residues 171-272 (STEL…KVND) and 282-382 (VTEV…ELLD).

It is found in the periplasm. The catalysed reaction is [protein]-peptidylproline (omega=180) = [protein]-peptidylproline (omega=0). Its function is as follows. Chaperone involved in the correct folding and assembly of outer membrane proteins. Recognizes specific patterns of aromatic residues and the orientation of their side chains, which are found more frequently in integral outer membrane proteins. May act in both early periplasmic and late outer membrane-associated steps of protein maturation. The sequence is that of Chaperone SurA from Salmonella choleraesuis (strain SC-B67).